The sequence spans 890 residues: Protein FAM171A1 (890 aa).

The first 21 residues, 1 to 21 (MSRSATLLLCLLGCHVWKAVT), serve as a signal peptide directing secretion. Residues 22 to 303 (KTLREPGAGA…VTQDITTYHT (282 aa)) are Extracellular-facing. N-linked (GlcNAc...) asparagine glycosylation is found at Asn-159, Asn-190, and Asn-194. A helical transmembrane segment spans residues 304–324 (VFLLAILGGMAFILLVLLCLL). Residues 325–890 (LYYCRRKCLK…ERPLMAFNIK (566 aa)) lie on the Cytoplasmic side of the membrane. Ser-358, Ser-360, Ser-371, Ser-422, Ser-443, and Ser-525 each carry phosphoserine. Disordered regions lie at residues 730–759 (AGRNGSNDASLDSGVDMNEPKSARKGRGDA) and 818–890 (EGSS…FNIK). The span at 747–757 (NEPKSARKGRG) shows a compositional bias: basic and acidic residues. Over residues 822–833 (RRSGGQLPSLQE) the composition is skewed to polar residues. Phosphoserine occurs at positions 849 and 855. Over residues 858-869 (EEEEDDDDDDQG) the composition is skewed to acidic residues. The span at 870–883 (EDKKSPWQKREERP) shows a compositional bias: basic and acidic residues.

The protein belongs to the FAM171 family. Interacts with ADAM10, NSG1 and OAZ1. As to expression, expressed in heart, brain, liver, skeletal muscle, kidney and pancreas. In brain, expressed by glia, pyramidal neurons and astrocytes (at protein level). Highly expressed in placental trophoblasts.

It is found in the cell membrane. Involved in the regulation of the cytoskeletal dynamics, plays a role in actin stress fiber formation. This Homo sapiens (Human) protein is Protein FAM171A1.